The chain runs to 361 residues: Endo-1,4-beta-xylanase 2 (361 aa).

The signal sequence occupies residues 1–26 (MHFSTITAALALLGLGAATPTDYSTS). A GH10 domain is found at 46 to 354 (IGTALTIRDD…KPAYSSVLKT (309 aa)). N-linked (GlcNAc...) asparagine glycans are attached at residues asparagine 88 and asparagine 130. Glutamate 160 (proton donor) is an active-site residue. Glutamate 276 functions as the Nucleophile in the catalytic mechanism. A disulfide bridge connects residues cysteine 304 and cysteine 310.

It belongs to the glycosyl hydrolase 10 (cellulase F) family.

It localises to the secreted. It catalyses the reaction Endohydrolysis of (1-&gt;4)-beta-D-xylosidic linkages in xylans.. Its pathway is glycan degradation; xylan degradation. In terms of biological role, endo-1,4-beta-xylanase involved in the hydrolysis of xylan, a major structural heterogeneous polysaccharide found in plant biomass representing the second most abundant polysaccharide in the biosphere, after cellulose. Hydrolyzes birch-wood xylan, with a similar activity toward oat-spelt xylan. Also shows weak activities toward pNP-beta-D-cellobioside and pNP-beta-D-xylopyranoside, but no detectable activity toward carboxymethyl cellulose and pNP-beta-L-arabinofuranoside.-. The polypeptide is Endo-1,4-beta-xylanase 2 (xynII) (Aureobasidium pullulans (Black yeast)).